Here is a 78-residue protein sequence, read N- to C-terminus: RNA-binding protein Hfq (78 aa).

One can recognise a Sm domain in the interval 10-69; it reads DPFLNALRKEHVPVSIYLVNGIKLQGHIESFDQYVVLLRNTVTQMVYKHAISTVVPARAV.

The protein belongs to the Hfq family. In terms of assembly, homohexamer.

Functionally, RNA chaperone that binds small regulatory RNA (sRNAs) and mRNAs to facilitate mRNA translational regulation in response to envelope stress, environmental stress and changes in metabolite concentrations. Also binds with high specificity to tRNAs. This Janthinobacterium sp. (strain Marseille) (Minibacterium massiliensis) protein is RNA-binding protein Hfq.